Reading from the N-terminus, the 315-residue chain is Aspartate carbamoyltransferase catalytic subunit (315 aa).

R64 and T65 together coordinate carbamoyl phosphate. Position 92 (K92) interacts with L-aspartate. R114, H142, and Q145 together coordinate carbamoyl phosphate. 2 residues coordinate L-aspartate: R175 and R229. Carbamoyl phosphate is bound by residues G270 and P271.

This sequence belongs to the aspartate/ornithine carbamoyltransferase superfamily. ATCase family. Heterododecamer (2C3:3R2) of six catalytic PyrB chains organized as two trimers (C3), and six regulatory PyrI chains organized as three dimers (R2).

It catalyses the reaction carbamoyl phosphate + L-aspartate = N-carbamoyl-L-aspartate + phosphate + H(+). Its pathway is pyrimidine metabolism; UMP biosynthesis via de novo pathway; (S)-dihydroorotate from bicarbonate: step 2/3. In terms of biological role, catalyzes the condensation of carbamoyl phosphate and aspartate to form carbamoyl aspartate and inorganic phosphate, the committed step in the de novo pyrimidine nucleotide biosynthesis pathway. The chain is Aspartate carbamoyltransferase catalytic subunit from Methylorubrum populi (strain ATCC BAA-705 / NCIMB 13946 / BJ001) (Methylobacterium populi).